Reading from the N-terminus, the 365-residue chain is Histidinol-phosphate aminotransferase (365 aa).

Position 220 is an N6-(pyridoxal phosphate)lysine (lysine 220).

The protein belongs to the class-II pyridoxal-phosphate-dependent aminotransferase family. Histidinol-phosphate aminotransferase subfamily. Homodimer. Pyridoxal 5'-phosphate serves as cofactor.

It catalyses the reaction L-histidinol phosphate + 2-oxoglutarate = 3-(imidazol-4-yl)-2-oxopropyl phosphate + L-glutamate. Its pathway is amino-acid biosynthesis; L-histidine biosynthesis; L-histidine from 5-phospho-alpha-D-ribose 1-diphosphate: step 7/9. This Xylella fastidiosa (strain 9a5c) protein is Histidinol-phosphate aminotransferase.